A 773-amino-acid chain; its full sequence is MSHSKFIPTVSIQSPVHHTNIKVQSTEPSFKKEDLHLISKDSLESDSESPTQKIKSQSDLEDQIQDNDMEPDSLEEENLSETEEEASRKAAQRAKKENLHTQDAAAINSRQPTEDKYSHIRYDPNWKSKKEEGKLLPVEALPESVDSSTENLTLNPLYPSKEPSMDLSAGKGEQKSPRSTASLLGSEFVSPNYELSTHRTEPFSVLSDSDPEEKSSNLSRYLKSSSSRSEAFLPGSRGPRRRKSKQYFVEKNKLTLGLPTPRMDSYLQLHNKKRGEGHLEQISYPVRVTDKTSIQNARETGNVAIDPEDKWHQRAQQLKDYQEHWSQYEHEKSSSGPRGQSSETTNGQQPSRKPAKHKIRKQRRHRHGPKSLVTEELVVSQGNQNNTPRHQQNPNKPIDTEVTQETVVIMNATNDDLQYSSVLRSQDPTVTSNQYAPLHQISDKVLYKNPARYYPVTNANRERGHNDQEEKRFSYQQLHIDTLSDMHLNYLHELNKKHPSGSQKGSQSVSNINRQASTEKKKQPKLAYTETKYKNLEILWKFHSSSEEQPAKASPDSRLSQIMEQHQQALLQLTEVQPHEGASPGLTLPPILPRVESESQLSSERSQRNQVKISRSNSESYLFQLEKGKKHRKRSSIKSSKLKGYQNRDVKLGGLGPDLESIRDKMQKLIQQKEYAKQVKEYNMKALSIPSKPQTAITENKSAVPRQKALEYAKTIPKPKPSNLSDQASKEKKTPTHAGKEDTLPEISLLEVLQNRHEREKQAVAAFKVLHIV.

5 disordered regions span residues 1–247 (MSHS…SKQY), 325–373 (WSQY…KSLV), 496–526 (KKHP…QPKL), 596–615 (ESES…KISR), and 713–743 (AKTI…KEDT). Over residues 10–28 (VSIQSPVHHTNIKVQSTEP) the composition is skewed to polar residues. Residues 29 to 43 (SFKKEDLHLISKDSL) show a composition bias toward basic and acidic residues. The segment covering 48-57 (ESPTQKIKSQ) has biased composition (polar residues). Residues 59-84 (DLEDQIQDNDMEPDSLEEENLSETEE) show a composition bias toward acidic residues. Residues 112 to 134 (PTEDKYSHIRYDPNWKSKKEEGK) show a composition bias toward basic and acidic residues. The span at 145–154 (VDSSTENLTL) shows a compositional bias: polar residues. Residues 216-229 (SNLSRYLKSSSSRS) show a composition bias toward low complexity. The span at 334 to 351 (SSGPRGQSSETTNGQQPS) shows a compositional bias: polar residues. Basic residues predominate over residues 353–369 (KPAKHKIRKQRRHRHGP). Polar residues predominate over residues 500–516 (SGSQKGSQSVSNINRQA). Positions 598 to 610 (ESQLSSERSQRNQ) are enriched in low complexity. The span at 728–743 (ASKEKKTPTHAGKEDT) shows a compositional bias: basic and acidic residues.

Its function is as follows. Required for the normal development of cilia in brain ependymal cells lining the ventricular surfaces. This Bos taurus (Bovine) protein is Jhy protein homolog (JHY).